A 466-amino-acid polypeptide reads, in one-letter code: Argininosuccinate lyase (466 aa).

Positions 27, 114, and 159 each coordinate 2-(N(omega)-L-arginino)succinate. His-160 serves as the catalytic Proton acceptor. The active-site Proton donor is Ser-281. Residues Asn-289, Tyr-321, Gln-326, and Lys-329 each coordinate 2-(N(omega)-L-arginino)succinate.

This sequence belongs to the lyase 1 family. Argininosuccinate lyase subfamily. Homotetramer. As to expression, eye lens.

The enzyme catalyses 2-(N(omega)-L-arginino)succinate = fumarate + L-arginine. The protein operates within amino-acid biosynthesis; L-arginine biosynthesis; L-arginine from L-ornithine and carbamoyl phosphate: step 3/3. In terms of biological role, delta crystallin, the principal crystallin in embryonic lens, is found only in birds and reptiles. This protein may also function as an enzymatically active argininosuccinate lyase. This is Argininosuccinate lyase (ASL2) from Gallus gallus (Chicken).